A 215-amino-acid polypeptide reads, in one-letter code: Ribonuclease T (215 aa).

An Exonuclease domain is found at 21–195 (VVIDVETAGF…YDSKKTAELF (175 aa)). Positions 24, 26, 182, and 187 each coordinate Mg(2+). The Proton donor/acceptor role is filled by His-182.

It belongs to the RNase T family. Homodimer. It depends on Mg(2+) as a cofactor.

Trims short 3' overhangs of a variety of RNA species, leaving a one or two nucleotide 3' overhang. Responsible for the end-turnover of tRNA: specifically removes the terminal AMP residue from uncharged tRNA (tRNA-C-C-A). Also appears to be involved in tRNA biosynthesis. This Wigglesworthia glossinidia brevipalpis protein is Ribonuclease T.